The primary structure comprises 120 residues: Galanin-like peptide (120 aa).

A signal peptide spans 1–22; that stretch reads MALTVPLIVLAVLLSLMESPAS. Residues 85 to 120 constitute a propeptide that is removed on maturation; the sequence is SLGETFAKPDSGVTFVGVPDVVPWKRIRPGTTRFQI.

It belongs to the galanin family.

The protein localises to the secreted. Functionally, hypothalamic neuropeptide which binds to the G-protein-coupled galanin receptors (GALR1, GALR2 and GALR3). Involved in a large number of putative physiological functions in CNS homeostatic processes, including the regulation of gonadotropin-releasing hormone secretion. This chain is Galanin-like peptide (GALP), found in Sus scrofa (Pig).